A 335-amino-acid polypeptide reads, in one-letter code: Dihydroorotate dehydrogenase (quinone) (335 aa).

FMN contacts are provided by residues 58–62 (AGADK) and T82. Residue K62 coordinates substrate. Residue 107–111 (NRNGF) coordinates substrate. FMN-binding residues include N135 and N168. N168 serves as a coordination point for substrate. The active-site Nucleophile is S171. N173 is a binding site for substrate. FMN-binding residues include K213 and G241. Substrate is bound at residue 242–243 (NT). Residues G264, G293, and 314 to 315 (YS) each bind FMN.

Belongs to the dihydroorotate dehydrogenase family. Type 2 subfamily. In terms of assembly, monomer. It depends on FMN as a cofactor.

It localises to the cell membrane. It catalyses the reaction (S)-dihydroorotate + a quinone = orotate + a quinol. It participates in pyrimidine metabolism; UMP biosynthesis via de novo pathway; orotate from (S)-dihydroorotate (quinone route): step 1/1. Its function is as follows. Catalyzes the conversion of dihydroorotate to orotate with quinone as electron acceptor. This chain is Dihydroorotate dehydrogenase (quinone), found in Actinobacillus pleuropneumoniae serotype 3 (strain JL03).